Here is a 351-residue protein sequence, read N- to C-terminus: Epoxyqueuosine reductase (351 aa).

D131 functions as the Proton donor in the catalytic mechanism. In terms of domain architecture, 4Fe-4S ferredoxin-type spans 177–205 (EDQPVDYGCGSCTRCVDFCPTKALLGDGR). C185, C188, C191, C195, C211, C237, C240, and C244 together coordinate [4Fe-4S] cluster.

Belongs to the QueG family. Monomer. Cob(II)alamin is required as a cofactor. It depends on [4Fe-4S] cluster as a cofactor.

It localises to the cytoplasm. It catalyses the reaction epoxyqueuosine(34) in tRNA + AH2 = queuosine(34) in tRNA + A + H2O. It functions in the pathway tRNA modification; tRNA-queuosine biosynthesis. Catalyzes the conversion of epoxyqueuosine (oQ) to queuosine (Q), which is a hypermodified base found in the wobble positions of tRNA(Asp), tRNA(Asn), tRNA(His) and tRNA(Tyr). The sequence is that of Epoxyqueuosine reductase from Lactococcus garvieae (strain Lg2) (Enterococcus seriolicida).